Consider the following 361-residue polypeptide: Spermidine/putrescine import ATP-binding protein PotA (361 aa).

The 235-residue stretch at 7-241 (IEVRNVSKRY…PQHRFVAQFI (235 aa)) folds into the ABC transporter domain. Residue 43-50 (GPSGCGKT) participates in ATP binding.

It belongs to the ABC transporter superfamily. Spermidine/putrescine importer (TC 3.A.1.11.1) family. In terms of assembly, the complex is composed of two ATP-binding proteins (PotA), two transmembrane proteins (PotB and PotC) and a solute-binding protein (PotD).

It is found in the cell inner membrane. It catalyses the reaction ATP + H2O + polyamine-[polyamine-binding protein]Side 1 = ADP + phosphate + polyamineSide 2 + [polyamine-binding protein]Side 1.. In terms of biological role, part of the ABC transporter complex PotABCD involved in spermidine/putrescine import. Responsible for energy coupling to the transport system. This is Spermidine/putrescine import ATP-binding protein PotA from Pseudomonas fluorescens (strain Pf0-1).